Here is a 164-residue protein sequence, read N- to C-terminus: Transcription elongation factor GreA (164 aa).

Residues 11–76 are a coiled coil; that stretch reads EESYDRLKAE…LQELLNNAKV (66 aa).

This sequence belongs to the GreA/GreB family.

Functionally, necessary for efficient RNA polymerase transcription elongation past template-encoded arresting sites. The arresting sites in DNA have the property of trapping a certain fraction of elongating RNA polymerases that pass through, resulting in locked ternary complexes. Cleavage of the nascent transcript by cleavage factors such as GreA or GreB allows the resumption of elongation from the new 3'terminus. GreA releases sequences of 2 to 3 nucleotides. The sequence is that of Transcription elongation factor GreA from Mycolicibacterium vanbaalenii (strain DSM 7251 / JCM 13017 / BCRC 16820 / KCTC 9966 / NRRL B-24157 / PYR-1) (Mycobacterium vanbaalenii).